The chain runs to 64 residues: Alpha-mammal toxin BmK-M8 (64 aa).

The region spanning 2-64 (RDAYIADSEN…ERIKEPGKCG (63 aa)) is the LCN-type CS-alpha/beta domain. Cystine bridges form between C12–C63, C16–C36, C22–C46, and C26–C48.

The protein belongs to the long (4 C-C) scorpion toxin superfamily. Sodium channel inhibitor family. Alpha subfamily. Expressed by the venom gland.

Its subcellular location is the secreted. Functionally, alpha toxins bind voltage-independently at site-3 of sodium channels (Nav) and inhibit the inactivation of the activated channels, thereby blocking neuronal transmission. This acidic toxin has a weak toxicity and is active against mammals. The polypeptide is Alpha-mammal toxin BmK-M8 (Olivierus martensii (Manchurian scorpion)).